Reading from the N-terminus, the 163-residue chain is NADH-quinone oxidoreductase subunit I (163 aa).

2 4Fe-4S ferredoxin-type domains span residues 53–83 and 94–123; these read LRRY…IEAG and VRYD…EGPN. 8 residues coordinate [4Fe-4S] cluster: Cys-63, Cys-66, Cys-69, Cys-73, Cys-103, Cys-106, Cys-109, and Cys-113.

Belongs to the complex I 23 kDa subunit family. In terms of assembly, NDH-1 is composed of 14 different subunits. Subunits NuoA, H, J, K, L, M, N constitute the membrane sector of the complex. It depends on [4Fe-4S] cluster as a cofactor.

It is found in the cell inner membrane. The enzyme catalyses a quinone + NADH + 5 H(+)(in) = a quinol + NAD(+) + 4 H(+)(out). In terms of biological role, NDH-1 shuttles electrons from NADH, via FMN and iron-sulfur (Fe-S) centers, to quinones in the respiratory chain. The immediate electron acceptor for the enzyme in this species is believed to be ubiquinone. Couples the redox reaction to proton translocation (for every two electrons transferred, four hydrogen ions are translocated across the cytoplasmic membrane), and thus conserves the redox energy in a proton gradient. The polypeptide is NADH-quinone oxidoreductase subunit I (Bartonella tribocorum (strain CIP 105476 / IBS 506)).